Here is a 598-residue protein sequence, read N- to C-terminus: Vanadium-dependent bromoperoxidase (598 aa).

Positions 361, 363, 365, 368, and 370 each coordinate Ca(2+). Residues lysine 400 and arginine 408 each coordinate vanadate. Residue histidine 480 is part of the active site. Serine 485, glycine 486, histidine 487, arginine 547, and histidine 553 together coordinate vanadate. Histidine 487 is an active-site residue.

This sequence belongs to the vanadium-dependent haloperoxidase family. In terms of assembly, homododecamer. The cofactor is Ca(2+). Requires vanadate as cofactor.

It carries out the reaction RH + Br(-) + H2O2 = RBr + 2 H2O.. Its function is as follows. Catalyzes the halogenation of organic substrates in the presence of hydrogen peroxide. In Corallina pilulifera (Red coralline alga), this protein is Vanadium-dependent bromoperoxidase.